A 384-amino-acid chain; its full sequence is N-acetylneuraminate epimerase (384 aa).

A signal peptide spans 1 to 24 (MMKTKYLLLPLLASSSLLSHMAFA). 7 Kelch repeats span residues 46–90 (KVYV…TVVG), 92–145 (NIFV…YSPD), 147–184 (KQVL…KIVD), 185–230 (DYMG…VIDG), 233–281 (ITLI…IAGA), 303–352 (AQFE…SVKG), and 354–383 (VLMV…IDIV). Catalysis depends on glutamate 239, which acts as the Proton acceptor.

Belongs to the NanM family. Homodimer.

It localises to the periplasm. The enzyme catalyses N-acetyl-alpha-neuraminate = N-acetyl-beta-neuraminate. Converts alpha-N-acetylneuranimic acid (Neu5Ac) to the beta-anomer, accelerating the equilibrium between the alpha- and beta-anomers. Probably facilitates sialidase-negative bacteria to compete successfully for limited amounts of extracellular Neu5Ac, which is likely taken up in the beta-anomer. In addition, the rapid removal of sialic acid from solution might be advantageous to the bacterium to damp down host responses. The protein is N-acetylneuraminate epimerase of Vibrio vulnificus (strain YJ016).